Consider the following 208-residue polypeptide: Ribonuclease HII (208 aa).

Residues 1–205 form the RNase H type-2 domain; that stretch reads MIVVGIDEAG…LQEIAPNYYI (205 aa). Residues Asp7, Glu8, and Asp104 each contribute to the a divalent metal cation site.

It belongs to the RNase HII family. Requires Mn(2+) as cofactor. The cofactor is Mg(2+).

Its subcellular location is the cytoplasm. It catalyses the reaction Endonucleolytic cleavage to 5'-phosphomonoester.. In terms of biological role, endonuclease that specifically degrades the RNA of RNA-DNA hybrids. This is Ribonuclease HII from Sulfurisphaera tokodaii (strain DSM 16993 / JCM 10545 / NBRC 100140 / 7) (Sulfolobus tokodaii).